The sequence spans 92 residues: Small ribosomal subunit protein uS19c (92 aa).

Belongs to the universal ribosomal protein uS19 family.

Its subcellular location is the plastid. The protein localises to the chloroplast. Functionally, protein S19 forms a complex with S13 that binds strongly to the 16S ribosomal RNA. The chain is Small ribosomal subunit protein uS19c from Populus alba (White poplar).